A 406-amino-acid chain; its full sequence is Bifunctional enzyme IspD/IspF (406 aa).

The 2-C-methyl-D-erythritol 4-phosphate cytidylyltransferase stretch occupies residues 1 to 247 (MSLIRVNGEA…ALFFNPAKDT (247 aa)). Positions 248-406 (FIGMGFDTHA…HVSMRYKQKL (159 aa)) are 2-C-methyl-D-erythritol 2,4-cyclodiphosphate synthase. Residues Asp254 and His256 each coordinate a divalent metal cation. 4-CDP-2-C-methyl-D-erythritol 2-phosphate contacts are provided by residues 254–256 (DTH) and 280–281 (HS). His288 lines the a divalent metal cation pocket. 4-CDP-2-C-methyl-D-erythritol 2-phosphate contacts are provided by residues 302 to 304 (DIG), 307 to 311 (FPDND), 378 to 381 (TTME), Phe385, and Lys388.

In the N-terminal section; belongs to the IspD/TarI cytidylyltransferase family. IspD subfamily. The protein in the C-terminal section; belongs to the IspF family. Requires a divalent metal cation as cofactor.

It catalyses the reaction 2-C-methyl-D-erythritol 4-phosphate + CTP + H(+) = 4-CDP-2-C-methyl-D-erythritol + diphosphate. It carries out the reaction 4-CDP-2-C-methyl-D-erythritol 2-phosphate = 2-C-methyl-D-erythritol 2,4-cyclic diphosphate + CMP. The protein operates within isoprenoid biosynthesis; isopentenyl diphosphate biosynthesis via DXP pathway; isopentenyl diphosphate from 1-deoxy-D-xylulose 5-phosphate: step 2/6. It participates in isoprenoid biosynthesis; isopentenyl diphosphate biosynthesis via DXP pathway; isopentenyl diphosphate from 1-deoxy-D-xylulose 5-phosphate: step 4/6. Its function is as follows. Bifunctional enzyme that catalyzes the formation of 4-diphosphocytidyl-2-C-methyl-D-erythritol from CTP and 2-C-methyl-D-erythritol 4-phosphate (MEP) (IspD), and catalyzes the conversion of 4-diphosphocytidyl-2-C-methyl-D-erythritol 2-phosphate (CDP-ME2P) to 2-C-methyl-D-erythritol 2,4-cyclodiphosphate (ME-CPP) with a corresponding release of cytidine 5-monophosphate (CMP) (IspF). This chain is Bifunctional enzyme IspD/IspF, found in Helicobacter pylori (strain P12).